Reading from the N-terminus, the 78-residue chain is MSDTVERVKKIIVEHLGVNADKVVENASFIDDLGADSLDTVELVMAFEEEFGVEIPDEAAETIFTVGDAVKFIDKASA.

The Carrier domain maps to Ser2–Ser77. Ser37 bears the O-(pantetheine 4'-phosphoryl)serine mark.

Belongs to the acyl carrier protein (ACP) family. 4'-phosphopantetheine is transferred from CoA to a specific serine of apo-ACP by AcpS. This modification is essential for activity because fatty acids are bound in thioester linkage to the sulfhydryl of the prosthetic group.

It is found in the cytoplasm. The protein operates within lipid metabolism; fatty acid biosynthesis. Functionally, carrier of the growing fatty acid chain in fatty acid biosynthesis. In Bartonella quintana (strain Toulouse) (Rochalimaea quintana), this protein is Acyl carrier protein.